Reading from the N-terminus, the 506-residue chain is MSAITESKPTRRWAMPDTLVIIFFVAILTSLATWVVPVGMFDSQEVQYQVDGQTKTRKVVDPHSFRILTNEAGEPEYHRVQLFTTGDERPGLMNFPFEGLTSGSKYGTAVGIIMFMLVIGGAFGIVMRTGTIDNGILALIRHTRGNEILFIPALFILFSLGGAVFGMGEEAVAFAIIIAPLMVRLGYDSITTVLVTYIATQIGFASSWMNPFCVVVAQGIAGVPVLSGSGLRIVVWVIATLIGLIFTMVYASRVKKNPLLSRVHESDRFFREKQADVEQRPFTFGDWLVLIVLTAVMVWVIWGVIVNAWFIPEIASQFFTMGLVIGIIGVVFRLNGMTVNTMASSFTEGARMMIAPALLVGFAKGILLLVGNGEAGDASVLNTILNSIANAISGLDNAVAAWFMLLFQAVFNFFVTSGSGQAALTMPLLAPLGDLVGVNRQVTVLAFQFGDGFSHIIYPTSASLMATLGVCRVDFRNWLKVGATLLGLLFIMSSVVVIGAQLMGYH.

13 helical membrane-spanning segments follow: residues 19-39, 107-127, 148-168, 171-191, 208-228, 231-251, 287-307, 310-330, 352-372, 398-418, 419-439, 442-462, and 485-505; these read LVII…VPVG, GTAV…GIVM, ILFI…FGMG, AVAF…DSIT, WMNP…VLSG, LRIV…MVYA, WLVL…VIVN, FIPE…IIGV, MMIA…LVGN, AVAA…VTSG, SGQA…VGVN, VTVL…PTSA, and LLGL…LMGY.

This sequence to H.influenzae HI_0594. The protein to B.subtilis YcgA.

The protein localises to the cell inner membrane. Functionally, metabolomic profiling of different yfcC over-expression and deletion strains suggests that it may affect the glyoxylate shunt. The sequence is that of Putative basic amino acid antiporter YfcC (yfcC) from Escherichia coli (strain K12).